A 423-amino-acid chain; its full sequence is Sphingomyelin phosphodiesterase 2 (423 aa).

E49 is a binding site for Mg(2+). H272 functions as the Proton acceptor in the catalytic mechanism. 2 consecutive transmembrane segments (helical) span residues 330–350 (VIGL…GGGA) and 354–374 (AILL…FYLF). The interval 400–423 (QDLGPEPQPALLLGQQEGDRTKEQ) is disordered.

It belongs to the neutral sphingomyelinase family. Mg(2+) serves as cofactor.

Its subcellular location is the cell membrane. The enzyme catalyses a sphingomyelin + H2O = phosphocholine + an N-acylsphing-4-enine + H(+). It carries out the reaction an N-(acyl)-sphingosylphosphocholine + H2O = an N-acyl-sphingoid base + phosphocholine + H(+). The catalysed reaction is 1-O-octadecyl-sn-glycero-3-phosphocholine + H2O = 1-O-octadecyl-sn-glycerol + phosphocholine + H(+). It catalyses the reaction 1-O-hexadecyl-sn-glycero-3-phosphocholine + H2O = 1-O-hexadecyl-sn-glycerol + phosphocholine + H(+). The enzyme catalyses 1-hexadecanoyl-sn-glycero-3-phosphocholine + H2O = 1-hexadecanoyl-sn-glycerol + phosphocholine + H(+). It carries out the reaction a sphingosylphosphocholine + H2O = a sphingoid base + phosphocholine + H(+). Its pathway is lipid metabolism; sphingolipid metabolism. Catalyzes, at least in vitro, the hydrolysis of sphingomyelin to form ceramide and phosphocholine. Also hydrolyzes 1-O-alkyl-2-lyso-sn-glycero-3-phosphocholine (lyso-platelet-activating factor) in vivo. Also acts on 1-acyl-2-lyso-sn-glycero-3-phosphocholine (lyso-PC) and sphingosylphosphocholine. The polypeptide is Sphingomyelin phosphodiesterase 2 (Homo sapiens (Human)).